The following is a 238-amino-acid chain: uncharacterized protein (238 aa).

Disordered regions lie at residues 1–51 (MPCT…ASCA) and 214–238 (ITVE…FPTA). The span at 16 to 31 (ATWRTARPAPRRCGSC) shows a compositional bias: low complexity.

This is an uncharacterized protein from Streptomyces griseus.